A 139-amino-acid chain; its full sequence is Angiogenin (139 aa).

An N-terminal signal peptide occupies residues 1–21 (MAMSSLWWTAILLLALTVSMC). Residue His-34 is the Proton acceptor of the active site. 3 disulfides stabilise this stretch: Cys-49–Cys-102, Cys-64–Cys-111, and Cys-82–Cys-126. TRNA contacts are provided by Cys-102 and Val-122. The Proton donor role is filled by His-133.

This sequence belongs to the pancreatic ribonuclease family. In terms of assembly, homodimer. Interacts with RNH1; inhibiting ANG ribonuclease activity.

The protein resides in the secreted. It localises to the nucleus. Its subcellular location is the nucleolus. The protein localises to the cytoplasm. It is found in the stress granule. Secreted ribonuclease that can either promote or restrict cell proliferation of target cells, depending on the context. Endocytosed in target cells via its receptor PLXNB2 and translocates to the cytoplasm or nucleus. Under stress conditions, localizes to the cytoplasm and promotes the assembly of stress granules (SGs): specifically cleaves a subset of tRNAs within anticodon loops to produce tRNA-derived stress-induced fragments (tiRNAs), resulting in translation repression and inhibition of cell proliferation. tiRNas also prevent formation of apoptosome, thereby promoting cell survival. Preferentially cleaves RNAs between a pyrimidine and an adenosine residue, suggesting that it cleaves the anticodon loop of tRNA(Ala) (32-UUAGCAU-38) after positions 33 and 36. Cleaves a subset of tRNAs, including tRNA(Ala), tRNA(Glu), tRNA(Gly), tRNA(Lys), tRNA(Val), tRNA(His), tRNA(Asp) and tRNA(Sec). Under growth conditions and in differentiated cells, translocates to the nucleus and stimulates ribosomal RNA (rRNA) transcription, including that containing the initiation site sequences of 45S rRNA, thereby promoting cell growth and proliferation. Angiogenin induces vascularization of normal and malignant tissues via its ability to promote rRNA transcription. This Gallus gallus (Chicken) protein is Angiogenin (ANG).